The chain runs to 203 residues: Twist-related protein 1 (203 aa).

Residues 1 to 18 (MMQDVSSSPVSPADDSLS) are compositionally biased toward low complexity. Positions 1 to 106 (MMQDVSSSPV…GGGSPQSYEE (106 aa)) are disordered. A compositionally biased stretch (basic residues) spans 34 to 43 (RGGRKRRSSR). 2 stretches are compositionally biased toward gly residues: residues 46–65 (AGGGAGPGGAAGGGVGGGDE) and 80–100 (GCGGGGGSAGGGGGSSSGGGS). Residues 109 to 160 (TQRVMANVRERQRTQSLNEAFAALRKIIPTLPSDKLSKIQTLKLAARYIDFL) enclose the bHLH domain. Residues 162 to 192 (QVLQSDELDSKMASCSYVAHERLSYAFSVWR) form a sufficient for transactivation activity region.

As to quaternary structure, efficient DNA binding requires dimerization with another bHLH protein. Homodimer or heterodimer with E proteins such as TCF3. ID1 binds preferentially to TCF3 but does not interact efficiently with TWIST1 so ID1 levels control the amount of TCF3 available to dimerize with TWIST and thus determine the type of dimer formed.

It localises to the nucleus. Its function is as follows. Acts as a transcriptional regulator. Inhibits myogenesis by sequestrating E proteins, inhibiting trans-activation by MEF2, and inhibiting DNA-binding by MYOD1 through physical interaction. This interaction probably involves the basic domains of both proteins. Also represses expression of pro-inflammatory cytokines such as TNFA and IL1B. Regulates cranial suture patterning and fusion. Activates transcription as a heterodimer with E proteins. Regulates gene expression differentially, depending on dimer composition. Homodimers induce expression of FGFR2 and POSTN while heterodimers repress FGFR2 and POSTN expression and induce THBS1 expression. Heterodimerization is also required for osteoblast differentiation. Represses the activity of the circadian transcriptional activator: NPAS2-BMAL1 heterodimer. This chain is Twist-related protein 1 (TWIST1), found in Saguinus oedipus (Cotton-top tamarin).